Consider the following 366-residue polypeptide: UPF0324 membrane protein RSc1111 (366 aa).

The next 8 helical transmembrane spans lie at 21–43, 103–125, 137–159, 169–191, 198–220, 240–262, 283–305, and 343–365; these read LAGA…TAWA, LGAS…GAWV, AVLV…APAV, AIAS…YALA, VAPA…VIAA, VLAL…LVLE, WFAA…ATWH, and AGVL…RWLA.

It belongs to the UPF0324 family.

It is found in the cell membrane. This is UPF0324 membrane protein RSc1111 from Ralstonia nicotianae (strain ATCC BAA-1114 / GMI1000) (Ralstonia solanacearum).